Consider the following 314-residue polypeptide: 4-diphosphocytidyl-2-C-methyl-D-erythritol kinase (314 aa).

The active site involves Lys11. An ATP-binding site is contributed by 95-105 (PIGAGLAGGST). Asp137 is a catalytic residue.

This sequence belongs to the GHMP kinase family. IspE subfamily.

It catalyses the reaction 4-CDP-2-C-methyl-D-erythritol + ATP = 4-CDP-2-C-methyl-D-erythritol 2-phosphate + ADP + H(+). It functions in the pathway isoprenoid biosynthesis; isopentenyl diphosphate biosynthesis via DXP pathway; isopentenyl diphosphate from 1-deoxy-D-xylulose 5-phosphate: step 3/6. Functionally, catalyzes the phosphorylation of the position 2 hydroxy group of 4-diphosphocytidyl-2C-methyl-D-erythritol. The sequence is that of 4-diphosphocytidyl-2-C-methyl-D-erythritol kinase from Synechococcus elongatus (strain ATCC 33912 / PCC 7942 / FACHB-805) (Anacystis nidulans R2).